The primary structure comprises 237 residues: Uridylate kinase (237 aa).

11–14 (KLSG) provides a ligand contact to ATP. Gly-53 is a binding site for UMP. ATP-binding residues include Gly-54 and Arg-58. UMP contacts are provided by residues Asp-73 and 134–141 (TGNPFFTT). Positions 161, 167, and 170 each coordinate ATP.

This sequence belongs to the UMP kinase family. In terms of assembly, homohexamer.

The protein localises to the cytoplasm. It carries out the reaction UMP + ATP = UDP + ADP. It functions in the pathway pyrimidine metabolism; CTP biosynthesis via de novo pathway; UDP from UMP (UMPK route): step 1/1. With respect to regulation, inhibited by UTP. Catalyzes the reversible phosphorylation of UMP to UDP. This chain is Uridylate kinase, found in Burkholderia vietnamiensis (strain G4 / LMG 22486) (Burkholderia cepacia (strain R1808)).